Reading from the N-terminus, the 381-residue chain is Protein-glutamate methylesterase/protein-glutamine glutaminase 1 (381 aa).

A Response regulatory domain is found at 14 to 132; the sequence is RVMLVDDSAV…DLAGGVDFKS (119 aa). The residue at position 65 (D65) is a 4-aspartylphosphate. The disordered stretch occupies residues 143–173; the sequence is QARRAGARPARPGGPPATRPVIASTSPRTPV. Low complexity predominate over residues 144 to 153; that stretch reads ARRAGARPAR. The 194-residue stretch at 188–381 folds into the CheB-type methylesterase domain; sequence PEPPDIIAIG…PWIMKLAARR (194 aa). Residues S199, H227, and D323 contribute to the active site.

This sequence belongs to the CheB family. Post-translationally, phosphorylated by CheA. Phosphorylation of the N-terminal regulatory domain activates the methylesterase activity.

It localises to the cytoplasm. It carries out the reaction [protein]-L-glutamate 5-O-methyl ester + H2O = L-glutamyl-[protein] + methanol + H(+). It catalyses the reaction L-glutaminyl-[protein] + H2O = L-glutamyl-[protein] + NH4(+). Functionally, involved in chemotaxis. Part of a chemotaxis signal transduction system that modulates chemotaxis in response to various stimuli. Catalyzes the demethylation of specific methylglutamate residues introduced into the chemoreceptors (methyl-accepting chemotaxis proteins or MCP) by CheR. Also mediates the irreversible deamidation of specific glutamine residues to glutamic acid. The protein is Protein-glutamate methylesterase/protein-glutamine glutaminase 1 of Paramagnetospirillum magneticum (strain ATCC 700264 / AMB-1) (Magnetospirillum magneticum).